A 387-amino-acid chain; its full sequence is Acetylornithine deacetylase (387 aa).

His80 contributes to the Zn(2+) binding site. Asp82 is a catalytic residue. Asp112 is a Zn(2+) binding site. The active site involves Glu144. The Zn(2+) site is built by Glu145, Glu169, and His355.

Belongs to the peptidase M20A family. ArgE subfamily. In terms of assembly, homodimer. Zn(2+) is required as a cofactor. It depends on Co(2+) as a cofactor. Requires glutathione as cofactor.

The protein resides in the cytoplasm. It catalyses the reaction N(2)-acetyl-L-ornithine + H2O = L-ornithine + acetate. The protein operates within amino-acid biosynthesis; L-arginine biosynthesis; L-ornithine from N(2)-acetyl-L-ornithine (linear): step 1/1. In terms of biological role, catalyzes the hydrolysis of the amide bond of N(2)-acetylated L-amino acids. Cleaves the acetyl group from N-acetyl-L-ornithine to form L-ornithine, an intermediate in L-arginine biosynthesis pathway, and a branchpoint in the synthesis of polyamines. The sequence is that of Acetylornithine deacetylase from Proteus mirabilis (strain HI4320).